Here is a 1013-residue protein sequence, read N- to C-terminus: Retinoblastoma-related protein 1 (1013 aa).

Residues 406 to 607 form a domain A region; sequence TPVSTAMTTA…EKGSSMYNSL (202 aa). Residues 406–858 are pocket; sequence TPVSTAMTTA…NEIFIPAVKP (453 aa). The interval 608 to 727 is spacer; that stretch reads IVARPSLALE…PGGGGETCAE (120 aa). A domain B region spans residues 728-858; the sequence is TGINIFFTKI…NEIFIPAVKP (131 aa). 2 positions are modified to phosphoserine: Ser-885 and Ser-898. The disordered stretch occupies residues 979–1013; it reads VANSLNLQNQNQNQNGSDASSSGGAAPLKTEPTDS. Residues 980 to 1004 show a composition bias toward low complexity; it reads ANSLNLQNQNQNQNGSDASSSGGAA.

The protein belongs to the retinoblastoma protein (RB) family. Interacts with the begomovirus replication-associated protein (Rep), the nanovirus Clink protein, the mastrevirus RepA protein, E2FA, E2FB and E2FC. Interacts with MSI1 through its Domain A. Interacts with ATPK1/S6K1. Interacts with SCR. Interacts with HAT2. Interacts with FAMA. Interacts with MYB124 and MYB88. Component of a DREAM-like complex which modulates a variety of developmentally regulated genes and of the mitotic genes in proliferating and differentiated cells. Associates with MYB3R3 in both earlier and later stages of leaves development. Interacts with MYB3R4 only at early stages of leaves development. Post-translationally, highly phosphorylated by CDKA-1 during G1 to S phase transition. Once hyper-phosphorylated, becomes inactive and unable to interact with E2F. Ubiquitinated. Subject to proteasome-dependent degradation during sucrose starvation. As to expression, expressed in actively dividing cells. Detected in the shoot apical meristem, in young leaf primordia and in both sporophytic tissue and the megagametophyte.

The protein localises to the nucleus. Key regulator of entry into cell division. Acts as a transcription repressor of E2F target genes, whose activity is required for progress from the G1 to the S phase of the cell cycle. Hyperphosphorylation by CDKA-1 prevents the binding to E2F transcription factors, allowing G1 to S phase transition to operate. Forms a stable complex with E2FA that functions in maintaining cell proliferation through repression of cell differentiation. Plays a central role in the mechanism controlling meristem cell differentiation, cell fate establishment and cell fate maintenance during organogenesis and gametogenesis. Required during lateral organ production. Also involved in controlling asymmetric divisions of stem cells in different stem cell niches. Acts as a negative regulator of cell proliferation during leaf and gametophytes development. At later stages of development, restricts the progression through additional endocycles. In the leaf, plays a role in the control of the mesophyll differentiation. Another role is its implication in the regulation of imprinted genes. Acts together with MSI1 to repress the expression of MET1 during gametogenesis. This in turn activates expression of the imprinted genes FIS2 and FWA. Regulates many genes of the polycomb repressive complex 2 (PRC2). Plays an important role in meiosis affecting different aspects of this complex process. Functions as a positive regulator of the developmental switch from embryonic heterotrophic growth to autotrophic growth. Interaction with mastrevirus RepA or nanovirus Clink protein disrupts the RBR/E2F interaction and releases the transcription of replicative enzymes needed by the virus by increasing the E2F DNA-binding activity. In Arabidopsis thaliana (Mouse-ear cress), this protein is Retinoblastoma-related protein 1 (RBR1).